Reading from the N-terminus, the 287-residue chain is Ribosomal RNA small subunit methyltransferase I (287 aa).

It belongs to the methyltransferase superfamily. RsmI family.

Its subcellular location is the cytoplasm. It carries out the reaction cytidine(1402) in 16S rRNA + S-adenosyl-L-methionine = 2'-O-methylcytidine(1402) in 16S rRNA + S-adenosyl-L-homocysteine + H(+). Its function is as follows. Catalyzes the 2'-O-methylation of the ribose of cytidine 1402 (C1402) in 16S rRNA. The polypeptide is Ribosomal RNA small subunit methyltransferase I (Streptococcus pyogenes serotype M1).